A 1887-amino-acid chain; its full sequence is Fatty acid synthase subunit alpha (1887 aa).

Residue Lys-37 forms a Glycyl lysine isopeptide (Lys-Gly) (interchain with G-Cter in ubiquitin) linkage. Residue Ser-50 is modified to Phosphoserine. The segment at 96–120 (ELAAKEEPAKEEAPAPTPAASAPAP) is disordered. Residues 98–108 (AAKEEPAKEEA) show a composition bias toward basic and acidic residues. Positions 145–220 (VKASLLLHVL…ETFQDTFSGA (76 aa)) constitute a Carrier domain. Ser-180 carries the post-translational modification O-(pantetheine 4'-phosphoryl)serine. The residue at position 523 (Ser-523) is a Phosphoserine. The segment at 675 to 874 (DKYVLITGAG…CGAIIGWTRG (200 aa)) is beta-ketoacyl reductase. A Phosphoserine modification is found at Ser-958. Positions 1123 to 1657 (QEVIVEEDLE…QKGGQAIVVH (535 aa)) constitute a Ketosynthase family 3 (KS3) domain. Catalysis depends on Cys-1305, which acts as the For beta-ketoacyl synthase activity. Ser-1440 is subject to Phosphoserine. Active-site for beta-ketoacyl synthase activity residues include His-1542 and His-1583. Residues Asp-1772, Val-1773, and Glu-1774 each coordinate Mg(2+). Acetyl-CoA-binding positions include 1772–1774 (DVE), Tyr-1798, Ser-1808, 1817–1827 (EAVFKSLGVKS), 1841–1844 (RVNK), and 1871–1873 (ISH). Residues Ser-1872 and His-1873 each coordinate Mg(2+).

This sequence belongs to the thiolase-like superfamily. Fungal fatty acid synthetase subunit alpha family. In terms of assembly, [Alpha(6)beta(6)] hexamers of two multifunctional subunits (alpha and beta). 4'-phosphopantetheine is transferred from CoA to a specific serine of the Acyl carrier domain by the C-terminal PPT domain. This modification is essential for activity because fatty acids are bound in thioester linkage to the sulfhydryl of the prosthetic group.

The enzyme catalyses acetyl-CoA + n malonyl-CoA + 2n NADPH + 4n H(+) = a long-chain-acyl-CoA + n CoA + n CO2 + 2n NADP(+).. The catalysed reaction is a fatty acyl-[ACP] + malonyl-[ACP] + H(+) = a 3-oxoacyl-[ACP] + holo-[ACP] + CO2. It carries out the reaction a (3R)-hydroxyacyl-[ACP] + NADP(+) = a 3-oxoacyl-[ACP] + NADPH + H(+). Inhibited by cerulenin by covalent binding to active site of the ketoacyl synthase (KS) region. Functionally, fatty acid synthetase catalyzes the formation of long-chain fatty acids from acetyl-CoA, malonyl-CoA and NADPH. The alpha subunit contains domains for: acyl carrier protein, 3-oxoacyl-[acyl-carrier-protein] reductase, and 3-oxoacyl-[acyl-carrier-protein] synthase. This subunit coordinates the binding of the six beta subunits to the enzyme complex. This chain is Fatty acid synthase subunit alpha (FAS2), found in Saccharomyces cerevisiae (strain ATCC 204508 / S288c) (Baker's yeast).